The sequence spans 193 residues: CASP-like protein 1E1 (193 aa).

Residues 1 to 30 are Cytoplasmic-facing; sequence MESQNKASLPVMDGLERRVVASQSEGASTC. A helical membrane pass occupies residues 31–51; the sequence is DLLLRVLALVLTLAAAIVLGV. Residues 52–86 lie on the Extracellular side of the membrane; the sequence is DKQTKVVPIKIVDTLPAINLPVSAKWHYLSAFTYS. Residues 87-107 form a helical membrane-spanning segment; sequence VASNAIACSYAALSLVLAVSG. Residues 108-113 lie on the Cytoplasmic side of the membrane; that stretch reads KKGIMS. The helical transmembrane segment at 114-134 threads the bilayer; the sequence is IVIVLDLLMVAMLFSSNGAAL. Residues 135–162 are Extracellular-facing; sequence AIGLMGYQGNSHVRWTKVCHVFGRFCNQ. A helical transmembrane segment spans residues 163 to 183; it reads VAVSISLSLLGSILFLLLVGI. Over 184–193 the chain is Cytoplasmic; sequence TSLRLHKKSK.

It belongs to the Casparian strip membrane proteins (CASP) family. In terms of assembly, homodimer and heterodimers.

The protein localises to the cell membrane. This Populus trichocarpa (Western balsam poplar) protein is CASP-like protein 1E1.